A 302-amino-acid chain; its full sequence is Beta-1,2-mannobiose phosphorylase (302 aa).

The protein belongs to the glycosyl hydrolase 130 family. In terms of assembly, monomer.

The enzyme catalyses beta-D-mannopyranosyl-(1-&gt;2)-D-mannopyranose + phosphate = alpha-D-mannose 1-phosphate + D-mannose. It functions in the pathway nucleotide-sugar biosynthesis; GDP-alpha-D-mannose biosynthesis. Probably involved in a salvage pathway for GDP-D-mannose biosynthesis. Catalyzes the reversible phosphorolysis of 1,2-beta-oligomannan. In phosphorolytic reactions, prefers beta-1,2-mannobiose (beta-1,2-Man2) as substrate. Produces alpha-D-mannose 1-phosphate, which is the precursor of GDP-D-mannose. This is Beta-1,2-mannobiose phosphorylase from Thermoanaerobacter sp. (strain X514).